A 431-amino-acid chain; its full sequence is Glutamate-1-semialdehyde 2,1-aminomutase (431 aa).

Residue lysine 269 is modified to N6-(pyridoxal phosphate)lysine.

This sequence belongs to the class-III pyridoxal-phosphate-dependent aminotransferase family. HemL subfamily. Homodimer. Pyridoxal 5'-phosphate is required as a cofactor.

The protein resides in the cytoplasm. The catalysed reaction is (S)-4-amino-5-oxopentanoate = 5-aminolevulinate. It functions in the pathway porphyrin-containing compound metabolism; protoporphyrin-IX biosynthesis; 5-aminolevulinate from L-glutamyl-tRNA(Glu): step 2/2. The protein operates within porphyrin-containing compound metabolism; chlorophyll biosynthesis. This is Glutamate-1-semialdehyde 2,1-aminomutase from Chlorobium limicola (strain DSM 245 / NBRC 103803 / 6330).